The primary structure comprises 610 residues: Elongation factor 4 (610 aa).

The tr-type G domain occupies 11-193; it reads EKIRNFSIIA…QIVEKVPAPT (183 aa). Residues 23–28 and 140–143 contribute to the GTP site; these read DHGKST and NKID.

Belongs to the TRAFAC class translation factor GTPase superfamily. Classic translation factor GTPase family. LepA subfamily.

The protein localises to the cell membrane. The enzyme catalyses GTP + H2O = GDP + phosphate + H(+). Required for accurate and efficient protein synthesis under certain stress conditions. May act as a fidelity factor of the translation reaction, by catalyzing a one-codon backward translocation of tRNAs on improperly translocated ribosomes. Back-translocation proceeds from a post-translocation (POST) complex to a pre-translocation (PRE) complex, thus giving elongation factor G a second chance to translocate the tRNAs correctly. Binds to ribosomes in a GTP-dependent manner. The chain is Elongation factor 4 from Streptococcus pyogenes serotype M1.